The following is a 606-amino-acid chain: Diphthine--ammonia ligase (606 aa).

This sequence in the N-terminal section; belongs to the Diphthine--ammonia ligase family. It in the C-terminal section; belongs to the RutC family.

The protein resides in the cytoplasm. Its subcellular location is the nucleus. It carries out the reaction diphthine-[translation elongation factor 2] + NH4(+) + ATP = diphthamide-[translation elongation factor 2] + AMP + diphosphate + H(+). It participates in protein modification; peptidyl-diphthamide biosynthesis. Functionally, amidase that catalyzes the last step of diphthamide biosynthesis using ammonium and ATP. Diphthamide biosynthesis consists in the conversion of an L-histidine residue in the translation elongation factor eEF-2 (eft201 or eft202) to diphthamide. Has a role in meiosis. This is Diphthine--ammonia ligase (mug71) from Schizosaccharomyces pombe (strain 972 / ATCC 24843) (Fission yeast).